Here is a 311-residue protein sequence, read N- to C-terminus: MISILMQTLKIATRQSPLALWQAEHIRDRLQALYPELKVELVKFVTQGDKILDTPLAKIGGKGLFVKELEAALLDGRADLAVHSMKDVPMHLPEGLSLAVICEREDPLDAFVSNHVMSFDQLPLGARVGTSSLRRKCQILKQRPDLEIIDLRGNVGTRLAKLDDGQYDAIVLASAGLKRLGLISRIRHSINAEISLPAVGQGALGLECRANDKKILDLIAPLAHQPTSACVRAERAFNAYLEGGCQVPIAGFATLTQECLTLEGRVGSVDGKTLLKDHVEGHADQAEVLGVQLAKQLLAQGAGELLRDLYQ.

Cys-245 bears the S-(dipyrrolylmethanemethyl)cysteine mark.

This sequence belongs to the HMBS family. In terms of assembly, monomer. The cofactor is dipyrromethane.

The catalysed reaction is 4 porphobilinogen + H2O = hydroxymethylbilane + 4 NH4(+). Its pathway is porphyrin-containing compound metabolism; protoporphyrin-IX biosynthesis; coproporphyrinogen-III from 5-aminolevulinate: step 2/4. Functionally, tetrapolymerization of the monopyrrole PBG into the hydroxymethylbilane pre-uroporphyrinogen in several discrete steps. The sequence is that of Porphobilinogen deaminase from Acinetobacter baylyi (strain ATCC 33305 / BD413 / ADP1).